The following is a 164-amino-acid chain: Anterior gradient protein 2 (164 aa).

Residues 1-20 (METVLKTLFVLLVATSLTLA) form the signal peptide. 2 short sequence motifs (homodimer stabilization; interchain) span residues 34–43 (SRGWGDNLEW) and 49–56 (EGLYKAKT).

Belongs to the AGR family. In terms of assembly, monomer and homodimer.

The protein localises to the secreted. Its subcellular location is the endoplasmic reticulum. The polypeptide is Anterior gradient protein 2 (Xenopus tropicalis (Western clawed frog)).